Consider the following 414-residue polypeptide: Probable aminotransferase TAT2 (414 aa).

The protein belongs to the class-I pyridoxal-phosphate-dependent aminotransferase family. It depends on pyridoxal 5'-phosphate as a cofactor.

This Arabidopsis thaliana (Mouse-ear cress) protein is Probable aminotransferase TAT2.